A 1083-amino-acid chain; its full sequence is Alpha-mannosidase (1083 aa).

Ser-2 carries the N-acetylserine modification. Zn(2+) contacts are provided by His-298, Asp-300, Asp-411, and His-626. Catalysis depends on Asp-411, which acts as the Nucleophile.

It belongs to the glycosyl hydrolase 38 family. Composed of isoforms with three constituent polypeptides described as [(107 kDa)-n (73 kDa)-(6-n) (31 kDa)-(6-n)], where n is 0-6. The 73 kDa and the 31 kDa polypeptides may be proteolytic derivatives of the 107 kDa polypeptide in the vacuole. Oligomerizes in the cytoplasm and retains its oligomeric form during import into the vacuole. It depends on Zn(2+) as a cofactor. Post-translationally, the N-terminus is blocked.

It is found in the vacuole. It catalyses the reaction Hydrolysis of terminal, non-reducing alpha-D-mannose residues in alpha-D-mannosides.. Functionally, degrades free oligosaccharides in the vacuole. This is Alpha-mannosidase (AMS1) from Saccharomyces cerevisiae (strain ATCC 204508 / S288c) (Baker's yeast).